A 529-amino-acid chain; its full sequence is Cytokinin dehydrogenase 4 (529 aa).

An N-terminal signal peptide occupies residues 1–27; sequence MRGAMKPSIVHCLKLLMLLALGGVTMH. Positions 63–244 constitute an FAD-binding PCMH-type domain; that stretch reads CSLLPAAVLH…TRARIALEPA (182 aa). FAD is bound by residues Ala99, Gly101, and Gly103. His104 carries the pros-8alpha-FAD histidine modification. Ser105, Gln109, Asp168, Thr173, Ser179, Val183, and Ile234 together coordinate FAD. N-linked (GlcNAc...) asparagine glycosylation is found at Asn285, Asn419, and Asn425. FAD is bound by residues Tyr479 and Gln517.

This sequence belongs to the oxygen-dependent FAD-linked oxidoreductase family. Monomer. FAD is required as a cofactor. Expressed in inflorescence meristems.

The protein resides in the secreted. It localises to the extracellular space. It carries out the reaction N(6)-dimethylallyladenine + A + H2O = 3-methyl-2-butenal + adenine + AH2. Functionally, catalyzes the oxidation of cytokinins, a family of N(6)-substituted adenine derivatives that are plant hormones, where the substituent is an isopentenyl group. The protein is Cytokinin dehydrogenase 4 (CKX4) of Oryza sativa subsp. japonica (Rice).